We begin with the raw amino-acid sequence, 468 residues long: Glutamate--tRNA ligase 2 (468 aa).

Residues 13–23 (PSPTGYLHIGG) carry the 'HIGH' region motif. A 'KMSKS' region motif is present at residues 241-245 (KLSKR). Lysine 244 lines the ATP pocket.

This sequence belongs to the class-I aminoacyl-tRNA synthetase family. Glutamate--tRNA ligase type 1 subfamily. As to quaternary structure, monomer.

Its subcellular location is the cytoplasm. The enzyme catalyses tRNA(Glu) + L-glutamate + ATP = L-glutamyl-tRNA(Glu) + AMP + diphosphate. Its function is as follows. Catalyzes the attachment of glutamate to tRNA(Glu) in a two-step reaction: glutamate is first activated by ATP to form Glu-AMP and then transferred to the acceptor end of tRNA(Glu). The protein is Glutamate--tRNA ligase 2 of Paracoccus denitrificans (strain Pd 1222).